The chain runs to 71 residues: uncharacterized protein (71 aa).

Residues 1–16 (MLLLYTVMILTCIIYK) lie on the Cytoplasmic side of the membrane. Residues 17–38 (LVPDNKYWPIHMFFFIMIYIVY) traverse the membrane as a helical segment. The Extracellular portion of the chain corresponds to 39 to 69 (MYEKLDIHEKSQFWNYTMARLSGHPVPTIIC). Asparagine 53 carries N-linked (GlcNAc...) asparagine; by host glycosylation.

It belongs to the asfivirus X69R family.

It is found in the host membrane. This is an uncharacterized protein from African swine fever virus (isolate Pig/Kenya/KEN-50/1950) (ASFV).